A 314-amino-acid chain; its full sequence is MNILLANPRGFCAGVDRAISIVELALEIHGAPIYVRHEVVHNRFVVDGLKAKGAVFVEELDEVPDGAIVIFSAHGVSQEVRQEAKRRDLKVFDATCPLVTKVHMQVARASKKGTKAILIGHEGHPEVIGTMGQYDNQDAGIFLVESVEDIAKLPVSSQDDLTFMTQTTLSIDDTSDVIEALKEKYPAIQGPRKNDICYATTNRQQAVRELAKQSQLVLVVGSKNSSNSNRLAELASRMGVPSKLIDGPQDIDPSWLDGVETIGITAGASAPEVLVQSVVEHLKTLGVTGVSNLEGCEENMVFEVPKELRIHEVK.

Cysteine 12 provides a ligand contact to [4Fe-4S] cluster. The (2E)-4-hydroxy-3-methylbut-2-enyl diphosphate site is built by histidine 41 and histidine 74. The dimethylallyl diphosphate site is built by histidine 41 and histidine 74. Isopentenyl diphosphate-binding residues include histidine 41 and histidine 74. Residue cysteine 96 participates in [4Fe-4S] cluster binding. Residue histidine 124 coordinates (2E)-4-hydroxy-3-methylbut-2-enyl diphosphate. Histidine 124 contacts dimethylallyl diphosphate. Position 124 (histidine 124) interacts with isopentenyl diphosphate. Catalysis depends on glutamate 126, which acts as the Proton donor. (2E)-4-hydroxy-3-methylbut-2-enyl diphosphate is bound at residue threonine 167. Cysteine 197 is a [4Fe-4S] cluster binding site. Residues serine 225, serine 226, asparagine 227, and serine 269 each coordinate (2E)-4-hydroxy-3-methylbut-2-enyl diphosphate. Residues serine 225, serine 226, asparagine 227, and serine 269 each contribute to the dimethylallyl diphosphate site. Residues serine 225, serine 226, asparagine 227, and serine 269 each contribute to the isopentenyl diphosphate site.

The protein belongs to the IspH family. The cofactor is [4Fe-4S] cluster.

It catalyses the reaction isopentenyl diphosphate + 2 oxidized [2Fe-2S]-[ferredoxin] + H2O = (2E)-4-hydroxy-3-methylbut-2-enyl diphosphate + 2 reduced [2Fe-2S]-[ferredoxin] + 2 H(+). The catalysed reaction is dimethylallyl diphosphate + 2 oxidized [2Fe-2S]-[ferredoxin] + H2O = (2E)-4-hydroxy-3-methylbut-2-enyl diphosphate + 2 reduced [2Fe-2S]-[ferredoxin] + 2 H(+). It functions in the pathway isoprenoid biosynthesis; dimethylallyl diphosphate biosynthesis; dimethylallyl diphosphate from (2E)-4-hydroxy-3-methylbutenyl diphosphate: step 1/1. The protein operates within isoprenoid biosynthesis; isopentenyl diphosphate biosynthesis via DXP pathway; isopentenyl diphosphate from 1-deoxy-D-xylulose 5-phosphate: step 6/6. Its function is as follows. Catalyzes the conversion of 1-hydroxy-2-methyl-2-(E)-butenyl 4-diphosphate (HMBPP) into a mixture of isopentenyl diphosphate (IPP) and dimethylallyl diphosphate (DMAPP). Acts in the terminal step of the DOXP/MEP pathway for isoprenoid precursor biosynthesis. This chain is 4-hydroxy-3-methylbut-2-enyl diphosphate reductase, found in Actinobacillus pleuropneumoniae serotype 3 (strain JL03).